The primary structure comprises 83 residues: RNA-binding protein Hfq (83 aa).

Positions 9–68 (DPYLNALRKERIPVSIFLVNGIKLQGQIESFDQFVILLKNTVSQMVYKHAISTVVPARNV) constitute a Sm domain.

The protein belongs to the Hfq family. Homohexamer.

RNA chaperone that binds small regulatory RNA (sRNAs) and mRNAs to facilitate mRNA translational regulation in response to envelope stress, environmental stress and changes in metabolite concentrations. Also binds with high specificity to tRNAs. The sequence is that of RNA-binding protein Hfq from Hahella chejuensis (strain KCTC 2396).